Consider the following 336-residue polypeptide: tRNA N6-adenosine threonylcarbamoyltransferase (336 aa).

Fe cation-binding residues include H114 and H118. Substrate-binding positions include 136–140 (LVSGG), D169, G182, D186, and N275. D301 serves as a coordination point for Fe cation.

This sequence belongs to the KAE1 / TsaD family. Requires Fe(2+) as cofactor.

The protein localises to the cytoplasm. The catalysed reaction is L-threonylcarbamoyladenylate + adenosine(37) in tRNA = N(6)-L-threonylcarbamoyladenosine(37) in tRNA + AMP + H(+). Its function is as follows. Required for the formation of a threonylcarbamoyl group on adenosine at position 37 (t(6)A37) in tRNAs that read codons beginning with adenine. Is involved in the transfer of the threonylcarbamoyl moiety of threonylcarbamoyl-AMP (TC-AMP) to the N6 group of A37, together with TsaE and TsaB. TsaD likely plays a direct catalytic role in this reaction. In Streptococcus pneumoniae (strain JJA), this protein is tRNA N6-adenosine threonylcarbamoyltransferase.